A 275-amino-acid chain; its full sequence is MTDDKDVLRDVWFGRIPTCFTLYQDEITEREAEPYYLLLPRVSYLTLVTDKVKKHFQKVMRQEDISEIWFEYEGTPLKWHYPIGLLFDLLASSSALPWNITVHFKSFPEKDLLHCPSKDVIEAHFMSCVKEADALKHKSQVINEMQKKDHKQLWMGLQNDRFDQFWAINRKLMEYPAEENGFRYIPFRIYQTTTERPFIQKLFRPVSTDGQLHTLGDLLKEVCPSAVAPEDGEKKNQVMIHGIEPMLETPLQWLSEHLSYPDNFLHISIIPQPTD.

M1 is modified (N-acetylmethionine). K130 is covalently cross-linked (Glycyl lysine isopeptide (Lys-Gly) (interchain with G-Cter in ATG12)).

The protein belongs to the ATG5 family. Forms a conjugate with ATG12. Part of the minor complex composed of 4 sets of ATG12-ATG5 and ATG16L1 (400 kDa); this complex interacts with ATG3 leading to disruption of ATG7 interaction and promotion of ATG8-like proteins lipidation. Forms an 800-kDa complex composed of ATG12-ATG5 and ATG16L2. The ATG12-ATG5 conjugate interacts with RAB33A; this interaction is bridged by ATG16L1 and promotes ATG12-ATG5-ATG16L1 complex recruitment to phagophores. Interacts with TECPR1; the interaction is direct and does not take place when ATG16L1 is associated with the ATG5-ATG12 conjugate. Interacts with DHX58/RIG-1, IFIH1/MDA5 and MAVS/IPS-1 in monomeric form as well as in ATG12-ATG5 conjugate form. The interaction with MAVS is further enhanced upon vesicular stomatitis virus (VSV) infection. Interacts with ATG3. Interacts with ATG7 and ATG10. Interacts with FADD. Interacts with Bassoon/BSN; this interaction is important for the regulation of presynaptic autophagy. Interacts with ATG16L2. In terms of processing, conjugated to ATG12; which is essential for autophagy, but is not required for association with isolation membrane. Post-translationally, acetylated by EP300.

The protein resides in the cytoplasm. It is found in the preautophagosomal structure membrane. In terms of biological role, involved in autophagic vesicle formation. Conjugation with ATG12, through a ubiquitin-like conjugating system involving ATG7 as an E1-like activating enzyme and ATG10 as an E2-like conjugating enzyme, is essential for its function. The ATG12-ATG5 conjugate acts as an E3-like enzyme which is required for lipidation of ATG8 family proteins and their association to the vesicle membranes. Involved in mitochondrial quality control after oxidative damage, and in subsequent cellular longevity. Plays a critical role in multiple aspects of lymphocyte development and is essential for both B and T lymphocyte survival and proliferation. Required for optimal processing and presentation of antigens for MHC II. Involved in the maintenance of axon morphology and membrane structures, as well as in normal adipocyte differentiation. Promotes primary ciliogenesis through removal of OFD1 from centriolar satellites and degradation of IFT20 via the autophagic pathway. As part of the ATG8 conjugation system with ATG12 and ATG16L1, required for recruitment of LRRK2 to stressed lysosomes and induction of LRRK2 kinase activity in response to lysosomal stress. May play an important role in the apoptotic process, possibly within the modified cytoskeleton. Its expression is a relatively late event in the apoptotic process, occurring downstream of caspase activity. Plays a crucial role in IFN-gamma-induced autophagic cell death by interacting with FADD. This chain is Autophagy protein 5, found in Bos taurus (Bovine).